The chain runs to 165 residues: MKTPRLPIAIQQAVMRRLRENLAQANLKLDRHYPEPKLVYTQRGTSAGTAWLESYEIRLNPVLLLENIDTFIAEVVPHELAHLLVWKHFGRKAPHGKEWKWMMESVLGVPARRTHQFALQSVRRNTFPYHCQCQQHQLTVRRHNRVVRGEAVYRCVHCGEPLVAG.

Residues Leu-22–Val-163 enclose the SprT-like domain. His-78 contributes to the Zn(2+) binding site. The active site involves Glu-79. His-82 provides a ligand contact to Zn(2+).

Belongs to the SprT family. Requires Zn(2+) as cofactor.

The protein resides in the cytoplasm. In Salmonella agona (strain SL483), this protein is Protein SprT.